Reading from the N-terminus, the 834-residue chain is DNA-directed RNA polymerase subunit beta' (834 aa).

Zn(2+)-binding residues include Cys-88, Cys-90, Cys-104, and Cys-107. Mg(2+) is bound by residues Asp-641, Asp-643, and Asp-645.

It belongs to the RNA polymerase beta' chain family. RpoC1 subfamily. In terms of assembly, in plastids the minimal PEP RNA polymerase catalytic core is composed of four subunits: alpha, beta, beta', and beta''. When a (nuclear-encoded) sigma factor is associated with the core the holoenzyme is formed, which can initiate transcription. The cofactor is Mg(2+). Zn(2+) is required as a cofactor.

It is found in the plastid. The enzyme catalyses RNA(n) + a ribonucleoside 5'-triphosphate = RNA(n+1) + diphosphate. Functionally, DNA-dependent RNA polymerase catalyzes the transcription of DNA into RNA using the four ribonucleoside triphosphates as substrates. This chain is DNA-directed RNA polymerase subunit beta' (rpoC1), found in Helicosporidium sp. subsp. Simulium jonesii (Green alga).